The following is a 91-amino-acid chain: Acylphosphatase (91 aa).

Positions 5–91 (WKKWNVRGVV…QEYKDFHVEF (87 aa)) constitute an Acylphosphatase-like domain. Residues R20 and N38 contribute to the active site.

Belongs to the acylphosphatase family.

It carries out the reaction an acyl phosphate + H2O = a carboxylate + phosphate + H(+). The sequence is that of Acylphosphatase (acyP) from Fervidobacterium nodosum (strain ATCC 35602 / DSM 5306 / Rt17-B1).